The primary structure comprises 415 residues: Probable tRNA pseudouridine synthase D (415 aa).

The active-site Nucleophile is Asp83. Residues Gly158–Arg378 enclose the TRUD domain.

This sequence belongs to the pseudouridine synthase TruD family.

It catalyses the reaction uridine(13) in tRNA = pseudouridine(13) in tRNA. Functionally, could be responsible for synthesis of pseudouridine from uracil-13 in transfer RNAs. This Thermococcus gammatolerans (strain DSM 15229 / JCM 11827 / EJ3) protein is Probable tRNA pseudouridine synthase D.